The primary structure comprises 247 residues: Tetraspanin-18 (247 aa).

Over 1–15 (MEGDCLSCMKYLMFL) the chain is Cytoplasmic. A helical transmembrane segment spans residues 16 to 36 (FNFFIFLGGACLLGVGIWVIV). Over 37–49 (DPTGFREIVAANP) the chain is Extracellular. The helical transmembrane segment at 50-70 (LLFTGAYIMLAMGAMLFLLGF) threads the bilayer. Residues 71–82 (LGCCGAIRENKC) are Cytoplasmic-facing. The helical transmembrane segment at 83-103 (LLLFFFMFILLIFLAELSAAI) threads the bilayer. Residues 104–222 (LAFIFRENLT…SFETYVYLAG (119 aa)) are Extracellular-facing. N-linked (GlcNAc...) asparagine glycosylation is found at Asn-111 and Asn-129. A helical transmembrane segment spans residues 223-243 (ALAIGVLAIELFAMIFAMCLF). The Cytoplasmic portion of the chain corresponds to 244–247 (RGIQ).

The protein belongs to the tetraspanin (TM4SF) family.

Its subcellular location is the membrane. Functionally, maintains CDH6 protein and promotes CDH6-dependent adherens junctions, inhibiting neural crest migration. The protein is Tetraspanin-18 of Gallus gallus (Chicken).